The sequence spans 139 residues: Ribulose bisphosphate carboxylase small subunit, plasmid (139 aa).

Belongs to the RuBisCO small chain family. Heterohexadecamer of 8 large and 8 small subunits.

Functionally, ruBisCO catalyzes two reactions: the carboxylation of D-ribulose 1,5-bisphosphate, the primary event in carbon dioxide fixation, as well as the oxidative fragmentation of the pentose substrate. Both reactions occur simultaneously and in competition at the same active site. Although the small subunit is not catalytic it is essential for maximal activity. The protein is Ribulose bisphosphate carboxylase small subunit, plasmid of Cupriavidus necator (strain ATCC 17699 / DSM 428 / KCTC 22496 / NCIMB 10442 / H16 / Stanier 337) (Ralstonia eutropha).